Here is an 85-residue protein sequence, read N- to C-terminus: MLPRSALARSLQLQRGVAARFYSEGSTGTPRGSGSEDSFVKRERATEDFFVRQREKEQLRHLKEQLEKQRKKIDSLENKIDSMTK.

The N-terminal 22 residues, 1–22, are a transit peptide targeting the mitochondrion; that stretch reads MLPRSALARSLQLQRGVAARFY. Positions 41–84 form a coiled coil; it reads KRERATEDFFVRQREKEQLRHLKEQLEKQRKKIDSLENKIDSMT.

Belongs to the ATPase inhibitor family. Monomer and homodimer. The protein aggregates less strongly with increasing pH.

The protein localises to the mitochondrion. In terms of biological role, endogenous ATPase inhibitor, which inhibits specifically the reverse ATPase reaction of mitochondrial F(1)F(0)-type ATP synthase. It limits ATP depletion when the mitochondrial membrane potential falls below a threshold and the F(1)F(0)-ATP synthase starts hydrolyzing ATP to pump protons out of the mitochondrial matrix. Required to avoid the consumption of cellular ATP when the F(1)F(0)-ATP synthase enzyme acts as an ATP hydrolase. Functions through inserting its N-terminal part into the catalytically active F1-ATPase, thereby blocking its rotational movement and subsequently the ATP hydrolase activity. The protein is F(1)-ATPase inhibitor IF(1), mitochondrial (INH1) of Saccharomyces cerevisiae (strain ATCC 204508 / S288c) (Baker's yeast).